The sequence spans 854 residues: DNA mismatch repair protein MutS (854 aa).

An ATP-binding site is contributed by 615 to 622 (GPNMGGKS).

The protein belongs to the DNA mismatch repair MutS family.

In terms of biological role, this protein is involved in the repair of mismatches in DNA. It is possible that it carries out the mismatch recognition step. This protein has a weak ATPase activity. In Aliivibrio fischeri (strain ATCC 700601 / ES114) (Vibrio fischeri), this protein is DNA mismatch repair protein MutS.